We begin with the raw amino-acid sequence, 156 residues long: Small ribosomal subunit protein uS7 (156 aa).

Belongs to the universal ribosomal protein uS7 family. Part of the 30S ribosomal subunit. Contacts proteins S9 and S11.

Functionally, one of the primary rRNA binding proteins, it binds directly to 16S rRNA where it nucleates assembly of the head domain of the 30S subunit. Is located at the subunit interface close to the decoding center, probably blocks exit of the E-site tRNA. This Mycobacterium leprae (strain TN) protein is Small ribosomal subunit protein uS7.